A 91-amino-acid polypeptide reads, in one-letter code: Small ribosomal subunit protein uS19 (91 aa).

It belongs to the universal ribosomal protein uS19 family.

Protein S19 forms a complex with S13 that binds strongly to the 16S ribosomal RNA. This is Small ribosomal subunit protein uS19 from Delftia acidovorans (strain DSM 14801 / SPH-1).